Consider the following 697-residue polypeptide: DNA ligase (697 aa).

NAD(+)-binding positions include 34 to 38 (DKTYD), 83 to 84 (SL), and Glu-114. The active-site N6-AMP-lysine intermediate is the Lys-116. Arg-137, Glu-171, Lys-315, and Lys-339 together coordinate NAD(+). Residues Cys-430, Cys-433, Cys-448, and Cys-453 each coordinate Zn(2+). The BRCT domain occupies 616 to 697 (KKSSKLNNLN…FHNLLKEENA (82 aa)).

It belongs to the NAD-dependent DNA ligase family. LigA subfamily. Requires Mg(2+) as cofactor. The cofactor is Mn(2+).

The catalysed reaction is NAD(+) + (deoxyribonucleotide)n-3'-hydroxyl + 5'-phospho-(deoxyribonucleotide)m = (deoxyribonucleotide)n+m + AMP + beta-nicotinamide D-nucleotide.. DNA ligase that catalyzes the formation of phosphodiester linkages between 5'-phosphoryl and 3'-hydroxyl groups in double-stranded DNA using NAD as a coenzyme and as the energy source for the reaction. It is essential for DNA replication and repair of damaged DNA. The polypeptide is DNA ligase (Mycoplasmopsis synoviae (strain 53) (Mycoplasma synoviae)).